Reading from the N-terminus, the 171-residue chain is Dual specificity protein phosphatase OPG106 (171 aa).

Belongs to the protein-tyrosine phosphatase family. Non-receptor class dual specificity subfamily. Homodimer.

The protein localises to the virion. It localises to the host cytoplasm. It carries out the reaction O-phospho-L-tyrosyl-[protein] + H2O = L-tyrosyl-[protein] + phosphate. It catalyses the reaction O-phospho-L-seryl-[protein] + H2O = L-seryl-[protein] + phosphate. In terms of biological role, serine/tyrosine phosphatase which down-regulates cellular antiviral response by dephosphorylating activated host STAT1 and blocking interferon (IFN)-stimulated innate immune responses. Dephosphorylates the OPG144 protein. This chain is Dual specificity protein phosphatase OPG106 (OPG106), found in Monkeypox virus.